A 358-amino-acid polypeptide reads, in one-letter code: UDP-N-acetylglucosamine--N-acetylmuramyl-(pentapeptide) pyrophosphoryl-undecaprenol N-acetylglucosamine transferase (358 aa).

UDP-N-acetyl-alpha-D-glucosamine contacts are provided by residues 10–12 (TGG), N124, S196, and Q293.

Belongs to the glycosyltransferase 28 family. MurG subfamily.

The protein localises to the cell membrane. The catalysed reaction is di-trans,octa-cis-undecaprenyl diphospho-N-acetyl-alpha-D-muramoyl-L-alanyl-D-glutamyl-meso-2,6-diaminopimeloyl-D-alanyl-D-alanine + UDP-N-acetyl-alpha-D-glucosamine = di-trans,octa-cis-undecaprenyl diphospho-[N-acetyl-alpha-D-glucosaminyl-(1-&gt;4)]-N-acetyl-alpha-D-muramoyl-L-alanyl-D-glutamyl-meso-2,6-diaminopimeloyl-D-alanyl-D-alanine + UDP + H(+). It functions in the pathway cell wall biogenesis; peptidoglycan biosynthesis. Its function is as follows. Cell wall formation. Catalyzes the transfer of a GlcNAc subunit on undecaprenyl-pyrophosphoryl-MurNAc-pentapeptide (lipid intermediate I) to form undecaprenyl-pyrophosphoryl-MurNAc-(pentapeptide)GlcNAc (lipid intermediate II). This chain is UDP-N-acetylglucosamine--N-acetylmuramyl-(pentapeptide) pyrophosphoryl-undecaprenol N-acetylglucosamine transferase, found in Exiguobacterium sp. (strain ATCC BAA-1283 / AT1b).